The following is a 256-amino-acid chain: MTDLKKAAQRAIELMDLTTLNDDDTDQKVIYLCHKAKTAAGNTAAICIYPRFIPIARKTLDEIGAEDIQIATVTNFPHGNDDIAIAVLETRAAVAYGADEVDVVFPYRALMEGNETIGFELVKACKEACGEVLLKVIIESGVLADPALIRRASELSIDAGADFIKTSTGKVPVNATLEAAEIMLTVISEKNTQVGFKPAGGVRDAAQAAEFLGVAERILGADWVSPRTFRFGASSLLNSLLHTLELADAPKPTQGY.

Aspartate 102 serves as the catalytic Proton donor/acceptor. Lysine 165 functions as the Schiff-base intermediate with acetaldehyde in the catalytic mechanism. Catalysis depends on lysine 197, which acts as the Proton donor/acceptor.

It belongs to the DeoC/FbaB aldolase family. DeoC type 2 subfamily.

Its subcellular location is the cytoplasm. It carries out the reaction 2-deoxy-D-ribose 5-phosphate = D-glyceraldehyde 3-phosphate + acetaldehyde. The protein operates within carbohydrate degradation; 2-deoxy-D-ribose 1-phosphate degradation; D-glyceraldehyde 3-phosphate and acetaldehyde from 2-deoxy-alpha-D-ribose 1-phosphate: step 2/2. In terms of biological role, catalyzes a reversible aldol reaction between acetaldehyde and D-glyceraldehyde 3-phosphate to generate 2-deoxy-D-ribose 5-phosphate. This Shewanella baltica (strain OS155 / ATCC BAA-1091) protein is Deoxyribose-phosphate aldolase.